Reading from the N-terminus, the 131-residue chain is Universal stress protein C (131 aa).

This sequence belongs to the universal stress protein A family.

The protein localises to the cytoplasm. Its function is as follows. Required for resistance to DNA-damaging agents. This Salmonella typhi protein is Universal stress protein C (uspC).